The following is a 190-amino-acid chain: Vexin (190 aa).

Residues 88-156 (AEKKASRFSR…DEATLPLTAH (69 aa)) form a disordered region. A compositionally biased stretch (polar residues) spans 117 to 133 (TDKQNAPTVPASPSSYE). Basic and acidic residues predominate over residues 136 to 149 (GCREQRPENPKDEA).

Belongs to the vexin family. In terms of tissue distribution, expressed in differentiating progenitors in the developing central nervous system (CNS).

The protein resides in the cell membrane. It is found in the nucleus. Its function is as follows. Required for neurogenesis in the neural plate and retina. Cooperates with cell cycle inhibitor cdknx/p27(xic1) to enhance neurogenesis and increase the levels of the neuronal determination factor neurog2/X-ngngr-1. The chain is Vexin from Xenopus laevis (African clawed frog).